The sequence spans 472 residues: Adenosylhomocysteinase (472 aa).

Substrate is bound by residues T63, D138, and E198. 199–201 contacts NAD(+); it reads TTT. Residues K228 and D232 each contribute to the substrate site. Residues N233, 262–267, E285, N320, 341–343, and N386 each bind NAD(+); these read GYGDVG and IGH.

It belongs to the adenosylhomocysteinase family. NAD(+) is required as a cofactor.

It is found in the cytoplasm. It carries out the reaction S-adenosyl-L-homocysteine + H2O = L-homocysteine + adenosine. It participates in amino-acid biosynthesis; L-homocysteine biosynthesis; L-homocysteine from S-adenosyl-L-homocysteine: step 1/1. Functionally, may play a key role in the regulation of the intracellular concentration of adenosylhomocysteine. The polypeptide is Adenosylhomocysteinase (Methylococcus capsulatus (strain ATCC 33009 / NCIMB 11132 / Bath)).